We begin with the raw amino-acid sequence, 393 residues long: Acetyl-CoA acetyltransferase (393 aa).

The active-site Acyl-thioester intermediate is the cysteine 88. Catalysis depends on proton acceptor residues histidine 349 and cysteine 379.

The protein belongs to the thiolase-like superfamily. Thiolase family.

It localises to the cytoplasm. It catalyses the reaction 2 acetyl-CoA = acetoacetyl-CoA + CoA. It participates in metabolic intermediate biosynthesis; (R)-mevalonate biosynthesis; (R)-mevalonate from acetyl-CoA: step 1/3. The chain is Acetyl-CoA acetyltransferase (atoB) from Pseudomonas aeruginosa (strain ATCC 15692 / DSM 22644 / CIP 104116 / JCM 14847 / LMG 12228 / 1C / PRS 101 / PAO1).